The sequence spans 428 residues: 3-phosphoshikimate 1-carboxyvinyltransferase (428 aa).

The 3-phosphoshikimate site is built by Lys23, Ser24, and Arg28. Lys23 contacts phosphoenolpyruvate. 2 residues coordinate phosphoenolpyruvate: Gly97 and Arg125. 7 residues coordinate 3-phosphoshikimate: Ser170, Ser171, Gln172, Ser198, Asp314, Asn337, and Lys341. Phosphoenolpyruvate is bound at residue Gln172. The active-site Proton acceptor is the Asp314. Positions 345, 387, and 412 each coordinate phosphoenolpyruvate.

The protein belongs to the EPSP synthase family. Monomer.

It is found in the cytoplasm. The catalysed reaction is 3-phosphoshikimate + phosphoenolpyruvate = 5-O-(1-carboxyvinyl)-3-phosphoshikimate + phosphate. It functions in the pathway metabolic intermediate biosynthesis; chorismate biosynthesis; chorismate from D-erythrose 4-phosphate and phosphoenolpyruvate: step 6/7. In terms of biological role, catalyzes the transfer of the enolpyruvyl moiety of phosphoenolpyruvate (PEP) to the 5-hydroxyl of shikimate-3-phosphate (S3P) to produce enolpyruvyl shikimate-3-phosphate and inorganic phosphate. The chain is 3-phosphoshikimate 1-carboxyvinyltransferase from Yersinia pestis bv. Antiqua (strain Antiqua).